The primary structure comprises 259 residues: Aliphatic sulfonates import ATP-binding protein SsuB 1 (259 aa).

In terms of domain architecture, ABC transporter spans valine 15–leucine 229. Glycine 47–threonine 54 lines the ATP pocket.

Belongs to the ABC transporter superfamily. Aliphatic sulfonates importer (TC 3.A.1.17.2) family. As to quaternary structure, the complex is composed of two ATP-binding proteins (SsuB), two transmembrane proteins (SsuC) and a solute-binding protein (SsuA).

It localises to the cell inner membrane. It catalyses the reaction ATP + H2O + aliphatic sulfonate-[sulfonate-binding protein]Side 1 = ADP + phosphate + aliphatic sulfonateSide 2 + [sulfonate-binding protein]Side 1.. Functionally, part of the ABC transporter complex SsuABC involved in aliphatic sulfonates import. Responsible for energy coupling to the transport system. This Pseudomonas fluorescens (strain ATCC BAA-477 / NRRL B-23932 / Pf-5) protein is Aliphatic sulfonates import ATP-binding protein SsuB 1.